Here is a 147-residue protein sequence, read N- to C-terminus: SsrA-binding protein (147 aa).

The protein belongs to the SmpB family.

Its subcellular location is the cytoplasm. Required for rescue of stalled ribosomes mediated by trans-translation. Binds to transfer-messenger RNA (tmRNA), required for stable association of tmRNA with ribosomes. tmRNA and SmpB together mimic tRNA shape, replacing the anticodon stem-loop with SmpB. tmRNA is encoded by the ssrA gene; the 2 termini fold to resemble tRNA(Ala) and it encodes a 'tag peptide', a short internal open reading frame. During trans-translation Ala-aminoacylated tmRNA acts like a tRNA, entering the A-site of stalled ribosomes, displacing the stalled mRNA. The ribosome then switches to translate the ORF on the tmRNA; the nascent peptide is terminated with the 'tag peptide' encoded by the tmRNA and targeted for degradation. The ribosome is freed to recommence translation, which seems to be the essential function of trans-translation. This is SsrA-binding protein from Mycoplasmopsis fermentans (strain ATCC 19989 / NBRC 14854 / NCTC 10117 / PG18) (Mycoplasma fermentans).